The sequence spans 188 residues: Photosystem I assembly protein Ycf4 (188 aa).

Helical transmembrane passes span Tyr-26–Ser-46 and Leu-68–Ile-88.

It belongs to the Ycf4 family.

The protein resides in the cellular thylakoid membrane. Its function is as follows. Seems to be required for the assembly of the photosystem I complex. The sequence is that of Photosystem I assembly protein Ycf4 from Synechococcus elongatus (strain ATCC 33912 / PCC 7942 / FACHB-805) (Anacystis nidulans R2).